The primary structure comprises 97 residues: UPF0235 protein DET1292 (97 aa).

This sequence belongs to the UPF0235 family.

The sequence is that of UPF0235 protein DET1292 from Dehalococcoides mccartyi (strain ATCC BAA-2266 / KCTC 15142 / 195) (Dehalococcoides ethenogenes (strain 195)).